The sequence spans 257 residues: Imidazole glycerol phosphate synthase subunit HisF (257 aa).

Active-site residues include Asp-11 and Asp-130.

It belongs to the HisA/HisF family. As to quaternary structure, heterodimer of HisH and HisF.

It is found in the cytoplasm. It catalyses the reaction 5-[(5-phospho-1-deoxy-D-ribulos-1-ylimino)methylamino]-1-(5-phospho-beta-D-ribosyl)imidazole-4-carboxamide + L-glutamine = D-erythro-1-(imidazol-4-yl)glycerol 3-phosphate + 5-amino-1-(5-phospho-beta-D-ribosyl)imidazole-4-carboxamide + L-glutamate + H(+). The protein operates within amino-acid biosynthesis; L-histidine biosynthesis; L-histidine from 5-phospho-alpha-D-ribose 1-diphosphate: step 5/9. IGPS catalyzes the conversion of PRFAR and glutamine to IGP, AICAR and glutamate. The HisF subunit catalyzes the cyclization activity that produces IGP and AICAR from PRFAR using the ammonia provided by the HisH subunit. This chain is Imidazole glycerol phosphate synthase subunit HisF, found in Aeromonas hydrophila subsp. hydrophila (strain ATCC 7966 / DSM 30187 / BCRC 13018 / CCUG 14551 / JCM 1027 / KCTC 2358 / NCIMB 9240 / NCTC 8049).